Reading from the N-terminus, the 204-residue chain is 3-isopropylmalate dehydratase small subunit (204 aa).

The protein belongs to the LeuD family. LeuD type 1 subfamily. Heterodimer of LeuC and LeuD.

It catalyses the reaction (2R,3S)-3-isopropylmalate = (2S)-2-isopropylmalate. Its pathway is amino-acid biosynthesis; L-leucine biosynthesis; L-leucine from 3-methyl-2-oxobutanoate: step 2/4. Catalyzes the isomerization between 2-isopropylmalate and 3-isopropylmalate, via the formation of 2-isopropylmaleate. The chain is 3-isopropylmalate dehydratase small subunit from Clavibacter michiganensis subsp. michiganensis (strain NCPPB 382).